We begin with the raw amino-acid sequence, 65 residues long: Large ribosomal subunit protein bL35c (65 aa).

The interval Ser-18–Val-50 is disordered. Residues Ile-22–Leu-44 show a composition bias toward basic residues.

Belongs to the bacterial ribosomal protein bL35 family.

The protein localises to the plastid. It localises to the chloroplast. The polypeptide is Large ribosomal subunit protein bL35c (Porphyra purpurea (Red seaweed)).